We begin with the raw amino-acid sequence, 769 residues long: Post-GPI attachment to proteins factor 6 (769 aa).

The N-terminal stretch at 1-33 (MGRVGAGGTAREAATGSLLLLLLLLARPPPAAA) is a signal peptide. At 34-543 (SNSKESEAGL…STAQTVAQQR (510 aa)) the chain is on the extracellular side. N-linked (GlcNAc...) asparagine glycans are attached at residues Asn-138 and Asn-411. One can recognise an EGF-like domain in the interval 495 to 531 (PCLNDCGPYGQCLLLRRYGYVYAGCSCKAGWRGWSCT). 3 disulfide bridges follow: Cys-496–Cys-506, Cys-500–Cys-519, and Cys-521–Cys-530. The chain crosses the membrane as a helical span at residues 544–564 (AAALLLTLSNLMFLAPIAISL). Residues 565-567 (HRS) lie on the Cytoplasmic side of the membrane. A helical transmembrane segment spans residues 568–588 (FLVEASVYFYTMFFSTFYHAC). Residues 589–603 (DQPGEAVLCILSYDT) are Extracellular-facing. Residues 604–624 (LQYCDFLGSGASTWVTILCMA) traverse the membrane as a helical segment. Residues 625-627 (RLK) lie on the Cytoplasmic side of the membrane. A helical transmembrane segment spans residues 628–648 (TILKQVLLVLGTLVIAMSLQM). The Extracellular portion of the chain corresponds to 649–651 (DRR). A helical membrane pass occupies residues 652–672 (GIWNLMGPCVFAFVIMASMWI). Over 673–688 (YRCGHRGQCYPTSWQR) the chain is Cytoplasmic. Residues 689 to 709 (WVFYLLPGISMASVGIAMYTS) traverse the membrane as a helical segment. Residues 710 to 715 (MMTSDN) are Extracellular-facing. Residues 716 to 736 (YYYTHSIWHILLAGSAAFLLP) form a helical membrane-spanning segment. Over 737 to 769 (PREEKAGSWACLQKFPCHYQICRNDRDELYTVT) the chain is Cytoplasmic.

The protein belongs to the TMEM8 family. Post-translationally, glycosylated.

It is found in the cell membrane. It localises to the lysosome membrane. The catalysed reaction is a 1,2-diacyl-sn-glycero-3-phosphocholine + H2O = a 1-acyl-sn-glycero-3-phosphocholine + a fatty acid + H(+). In terms of biological role, involved in the lipid remodeling steps of GPI-anchor maturation. Lipid remodeling steps consist in the generation of 2 saturated fatty chains at the sn-2 position of GPI-anchor proteins (GPI-AP). Has phospholipase A2 activity that removes an acyl-chain at the sn-2 position of GPI-anchors during the remodeling of GPI. Required for the shedding of the GPI-AP CRIPTO, but not CFC1, at the cell surface. Shedding of CRIPTO modulates Nodal signaling by allowing soluble CRIPTO to act as a Nodal coreceptor on other cells. Also indirectly involved in the translocation of RAC1 from the cytosol to the plasma membrane by maintaining the steady state amount of CAV1-enriched plasma membrane subdomains, stabilizing RAC1 at the plasma membrane. The polypeptide is Post-GPI attachment to proteins factor 6 (Mus musculus (Mouse)).